A 460-amino-acid polypeptide reads, in one-letter code: ERAD-associated E3 ubiquitin-protein ligase HRD1B (460 aa).

The Cytoplasmic segment spans residues 1–3 (MIQ). A helical transmembrane segment spans residues 4-24 (LKVYAGLSTLATLVVIYHAFS). The Lumenal portion of the chain corresponds to 25–40 (SRGQFYPATVYLSTSK). Residues 41 to 61 (INLVVLLNMGLVLMLSLWNLV) traverse the membrane as a helical segment. At 62–98 (KIVFLGSLREAEVERLNEQAWRELMEILFAITIFRQD) the chain is on the cytoplasmic side. The helical transmembrane segment at 99–119 (FSVGFISLVVTLLLIKGLHWM) threads the bilayer. At 120-140 (AQKRVEYIETTPSVTLLSHVR) the chain is on the lumenal side. Residues 141–161 (IVSFMVFLLILDCLLTYSSIQ) traverse the membrane as a helical segment. The Cytoplasmic segment spans residues 162-170 (QLIQSRKAS). The helical transmembrane segment at 171–191 (MSVFFTFEYMILATTTVSIIV) threads the bilayer. The Lumenal segment spans residues 192-225 (KYAFYVTDMLKEGQWEGKPVYTFYLELVRDLLHL). Residues 226-246 (SMYLCFFLMIFMNYGLPLHLI) traverse the membrane as a helical segment. Topologically, residues 247–460 (RELYETFRNF…TKGKSVADTA (214 aa)) are cytoplasmic. An RING-type; atypical zinc finger spans residues 292-330 (CIICREEMTSAKKLVCGHLFHVHCLRSWLERQNTCPTCR). Residues 339-378 (ATSTASGNRGPHQESLQQGTGTSSSDGQGSSVSAAASENM) form a disordered region. The span at 353-375 (SLQQGTGTSSSDGQGSSVSAAAS) shows a compositional bias: low complexity.

This sequence belongs to the HRD1 family.

Its subcellular location is the endoplasmic reticulum membrane. It carries out the reaction S-ubiquitinyl-[E2 ubiquitin-conjugating enzyme]-L-cysteine + [acceptor protein]-L-lysine = [E2 ubiquitin-conjugating enzyme]-L-cysteine + N(6)-ubiquitinyl-[acceptor protein]-L-lysine.. It participates in protein modification; protein ubiquitination. In terms of biological role, probable component of the HRD1 ubiquitin ligase complex that mediates the rapid degradation of misfolded endoplasmic reticulum (ER) proteins, a process called ER-associated degradation (ERAD). Targets the misfolded LRR receptor kinase BRI1. Functions redundantly with HRD3A. In Arabidopsis thaliana (Mouse-ear cress), this protein is ERAD-associated E3 ubiquitin-protein ligase HRD1B.